A 543-amino-acid chain; its full sequence is Carboxypeptidase Y homolog A (543 aa).

A signal peptide spans Met-1–Val-17. A propeptide spanning residues Pro-18–Lys-124 is cleaved from the precursor. Intrachain disulfides connect Cys-179/Cys-419, Cys-313/Cys-327, Cys-337/Cys-360, Cys-344/Cys-353, and Cys-382/Cys-389. N-linked (GlcNAc...) asparagine glycosylation is present at Asn-210. The active site involves Ser-266. Asp-458 is an active-site residue. Residue Asn-509 is glycosylated (N-linked (GlcNAc...) asparagine). The active site involves His-520.

It belongs to the peptidase S10 family.

It localises to the vacuole. The enzyme catalyses Release of a C-terminal amino acid with broad specificity.. Vacuolar carboxypeptidase involved in degradation of small peptides. Digests preferentially peptides containing an aliphatic or hydrophobic residue in P1' position, as well as methionine, leucine or phenylalanine in P1 position of ester substrate. In Aspergillus clavatus (strain ATCC 1007 / CBS 513.65 / DSM 816 / NCTC 3887 / NRRL 1 / QM 1276 / 107), this protein is Carboxypeptidase Y homolog A (cpyA).